The following is a 203-amino-acid chain: Dephospho-CoA kinase (203 aa).

Residues 3 to 201 (SVGLTGGIGS…QRYLGYAAAA (199 aa)) form the DPCK domain. 11 to 16 (GSGKTT) lines the ATP pocket.

This sequence belongs to the CoaE family.

The protein localises to the cytoplasm. The catalysed reaction is 3'-dephospho-CoA + ATP = ADP + CoA + H(+). Its pathway is cofactor biosynthesis; coenzyme A biosynthesis; CoA from (R)-pantothenate: step 5/5. Its function is as follows. Catalyzes the phosphorylation of the 3'-hydroxyl group of dephosphocoenzyme A to form coenzyme A. The polypeptide is Dephospho-CoA kinase (Burkholderia thailandensis (strain ATCC 700388 / DSM 13276 / CCUG 48851 / CIP 106301 / E264)).